A 269-amino-acid polypeptide reads, in one-letter code: MKRSDKYTDDYIEQRYESQRPHYNTYYQPIGKPPKKKKSKRIFLKAIITILILLIIFFGVMYFISSRANVDDLKSIENKSDFVATENMPNYVKGAFISMEDERFYKHHGFDIKGTTRALFSTISDRDVQGGSTITQQVVKNYYYDNERSFTRKIKELFVARKVEKQYSKNQILSFYMNNIYYGDNQYTVEGAANHYFGVTVDKNNSNMSQISVLQSAILASKVNAPSVYDVNDMSNNYINRVKTNLEKMKQQNFISESQYQEAMSQLGN.

A helical membrane pass occupies residues 46–66 (AIITILILLIIFFGVMYFISS).

The protein belongs to the glycosyltransferase 51 family.

Its subcellular location is the cell membrane. The enzyme catalyses [GlcNAc-(1-&gt;4)-Mur2Ac(oyl-L-Ala-gamma-D-Glu-L-Lys-D-Ala-D-Ala)](n)-di-trans,octa-cis-undecaprenyl diphosphate + beta-D-GlcNAc-(1-&gt;4)-Mur2Ac(oyl-L-Ala-gamma-D-Glu-L-Lys-D-Ala-D-Ala)-di-trans,octa-cis-undecaprenyl diphosphate = [GlcNAc-(1-&gt;4)-Mur2Ac(oyl-L-Ala-gamma-D-Glu-L-Lys-D-Ala-D-Ala)](n+1)-di-trans,octa-cis-undecaprenyl diphosphate + di-trans,octa-cis-undecaprenyl diphosphate + H(+). The protein operates within cell wall biogenesis; peptidoglycan biosynthesis. In terms of biological role, peptidoglycan polymerase that catalyzes glycan chain elongation using lipid-linked disaccharide-pentapeptide as the substrate. The polypeptide is Monofunctional glycosyltransferase (Staphylococcus epidermidis (strain ATCC 35984 / DSM 28319 / BCRC 17069 / CCUG 31568 / BM 3577 / RP62A)).